The chain runs to 152 residues: Large-conductance mechanosensitive channel (152 aa).

A run of 2 helical transmembrane segments spans residues 14-34 (VIDL…VTSL) and 81-101 (GLFL…FIVI).

It belongs to the MscL family. In terms of assembly, homopentamer.

The protein localises to the cell membrane. Channel that opens in response to stretch forces in the membrane lipid bilayer. May participate in the regulation of osmotic pressure changes within the cell. In Clostridium perfringens (strain ATCC 13124 / DSM 756 / JCM 1290 / NCIMB 6125 / NCTC 8237 / Type A), this protein is Large-conductance mechanosensitive channel.